Consider the following 497-residue polypeptide: Serine hydroxymethyltransferase (497 aa).

(6S)-5,6,7,8-tetrahydrofolate-binding positions include leucine 176 and 180–182 (GHL). Residue lysine 289 is modified to N6-(pyridoxal phosphate)lysine. Glutamate 306 lines the (6S)-5,6,7,8-tetrahydrofolate pocket.

The protein belongs to the SHMT family. As to quaternary structure, homodimer. The cofactor is pyridoxal 5'-phosphate.

The protein localises to the cytoplasm. The enzyme catalyses (6R)-5,10-methylene-5,6,7,8-tetrahydrofolate + glycine + H2O = (6S)-5,6,7,8-tetrahydrofolate + L-serine. Its pathway is one-carbon metabolism; tetrahydrofolate interconversion. The protein operates within amino-acid biosynthesis; glycine biosynthesis; glycine from L-serine: step 1/1. Its function is as follows. Catalyzes the reversible interconversion of serine and glycine with tetrahydrofolate (THF) serving as the one-carbon carrier. This reaction serves as the major source of one-carbon groups required for the biosynthesis of purines, thymidylate, methionine, and other important biomolecules. Also exhibits THF-independent aldolase activity toward beta-hydroxyamino acids, producing glycine and aldehydes, via a retro-aldol mechanism. The sequence is that of Serine hydroxymethyltransferase from Chlamydia pneumoniae (Chlamydophila pneumoniae).